Consider the following 331-residue polypeptide: Glyceraldehyde-3-phosphate dehydrogenase 3 (331 aa).

NAD(+)-binding positions include 11-12, Asp33, and Glu77; that span reads RI. Ser148 is modified (phosphoserine). 148–150 lines the D-glyceraldehyde 3-phosphate pocket; sequence SCT. The Nucleophile role is filled by Cys149. Ser177 bears the Phosphoserine mark. Thr179 is a D-glyceraldehyde 3-phosphate binding site. Ser200 carries the post-translational modification Phosphoserine. Residues 208 to 209 and Arg231 contribute to the D-glyceraldehyde 3-phosphate site; that span reads TG. Asn313 lines the NAD(+) pocket.

Belongs to the glyceraldehyde-3-phosphate dehydrogenase family. As to quaternary structure, homotetramer.

Its subcellular location is the cytoplasm. The enzyme catalyses D-glyceraldehyde 3-phosphate + phosphate + NAD(+) = (2R)-3-phospho-glyceroyl phosphate + NADH + H(+). Its pathway is carbohydrate degradation; glycolysis; pyruvate from D-glyceraldehyde 3-phosphate: step 1/5. This is Glyceraldehyde-3-phosphate dehydrogenase 3 from Kluyveromyces marxianus (Yeast).